Consider the following 41-residue polypeptide: Large ribosomal subunit protein bL36 (41 aa).

This sequence belongs to the bacterial ribosomal protein bL36 family.

The sequence is that of Large ribosomal subunit protein bL36 from Rhizobium etli (strain CIAT 652).